The primary structure comprises 244 residues: MAVISMKQLLEAGVHFGHQTRRWNPKMARYIFTERNGIYIIDLQKTVRKVEEAYNYVRNLAADGGTVLFVGTKKQAQESVKEEAERCGMYYVNERWLGGMMTNFQTIQKRVSRLRELEKMEAEGVFEVLPKKEVAALRHEMEKLERFLGGIKSMKKLPDALFVVDPRKERIAVAEARRLNIPIVGIVDTNCDPDEIDVVIPANDDAIRAVKLLTGRIADAIIEGQQGSDEAEEAEEAAEEVVAE.

Residues glycine 224–glutamate 244 form a disordered region. The segment covering aspartate 229–glutamate 244 has biased composition (acidic residues).

Belongs to the universal ribosomal protein uS2 family.

The protein is Small ribosomal subunit protein uS2 of Desulfitobacterium hafniense (strain DSM 10664 / DCB-2).